The sequence spans 443 residues: 5-methylthioadenosine/S-adenosylhomocysteine deaminase (443 aa).

Residues H74 and H76 each contribute to the Zn(2+) site. E103 and H196 together coordinate substrate. H223 serves as a coordination point for Zn(2+). Residues E226 and D311 each contribute to the substrate site. D311 lines the Zn(2+) pocket.

It belongs to the metallo-dependent hydrolases superfamily. MTA/SAH deaminase family. Zn(2+) serves as cofactor.

It catalyses the reaction S-adenosyl-L-homocysteine + H2O + H(+) = S-inosyl-L-homocysteine + NH4(+). The catalysed reaction is S-methyl-5'-thioadenosine + H2O + H(+) = S-methyl-5'-thioinosine + NH4(+). In terms of biological role, catalyzes the deamination of 5-methylthioadenosine and S-adenosyl-L-homocysteine into 5-methylthioinosine and S-inosyl-L-homocysteine, respectively. Is also able to deaminate adenosine. The chain is 5-methylthioadenosine/S-adenosylhomocysteine deaminase from Haloquadratum walsbyi (strain DSM 16790 / HBSQ001).